Here is a 227-residue protein sequence, read N- to C-terminus: Protein lin-28 (227 aa).

The segment covering 1 to 17 has biased composition (polar residues); the sequence is MSTVVSEGRNDGNNRYS. Residues 1-27 form a disordered region; it reads MSTVVSEGRNDGNNRYSPQDEVEDRLP. One can recognise a CSD domain in the interval 52 to 120; that stretch reads RYFGSCKWFN…GREAYAVSGE (69 aa). 2 CCHC-type zinc fingers span residues 143–160 and 166–183; these read RCFR…SCPN and KVCY…ICPE. Zn(2+) contacts are provided by Cys-144, Cys-147, His-153, Cys-158, Cys-168, Cys-171, His-176, and Cys-181. A disordered region spans residues 181–227; the sequence is CPERRRKHRPEQVAAEEAEAARMAAEKSSPTTSDDDIREKNSNSSDE.

The protein belongs to the lin-28 family. As to quaternary structure, component of a complex at least containing lep-2, lin-28 and the long non-coding RNA lep-5, which mediates the degradation of lin-28. Post-translationally, cleavage by caspase ced-3 during larval development probably induces lin-28 degradation.

The protein resides in the cytoplasm. Its function is as follows. Heterochronic protein which controls the choice of stage specific cell fates. Regulates the timing of the second larval stage events (L2 events) in the hypodermis. May negatively regulate the larval to adult transition via the suppression of the microRNA (miRNA) let-7 during L3. Through this regulatory role, controls the timing of the sexual maturation of the nervous system. Also has a role in the fox-1-sex-1-mediated determination of sexual fate. Plays a role in governing the developmental timing of male tail tip morphogenesis. Plays a role in controlling the seam cell number during larval stages. Plays a role in vulval development. The protein is Protein lin-28 of Caenorhabditis elegans.